Here is a 696-residue protein sequence, read N- to C-terminus: Spindle assembly checkpoint component MAD1 (696 aa).

Disordered regions lie at residues 1–22 and 394–415; these read MSTG…SINN and QIHA…TENK. Basic and acidic residues predominate over residues 402-413; that stretch reads KQQEQEKEENTE.

This sequence belongs to the MAD1 family. Component of the mitotic checkpoint complex (MCC).

The protein resides in the nucleus. In terms of biological role, central component of the spindle assembly checkpoint which is a feedback control that prevents cells with incompletely assembled spindles from leaving mitosis. The polypeptide is Spindle assembly checkpoint component MAD1 (Candida albicans (strain SC5314 / ATCC MYA-2876) (Yeast)).